The primary structure comprises 632 residues: Probable potassium transport system protein Kup 1 (632 aa).

The next 12 membrane-spanning stretches (helical) occupy residues 17–37 (LFYLALGSVGVVYGDIGTSPL), 60–80 (LISLMIWALTIIVTIKYVLFL), 106–126 (TAILMLLGLMGAALFLGDAMI), 146–166 (LADYIVPISVVILALLFVVQS), 175–195 (FFGPITAVWFLVMAAAGISHI), 210–230 (AVAFLLHEGFYGIVVLGAVFL), 254–274 (WFLLVFPALTLNYLGQGALVL), 292–312 (ALLPVVILATAATIIASQAVI), 344–364 (IFVPSVNAVLFIGVIFLVLGF), 370–390 (LATAYGISVTGAMVVTSIMAF), 401–421 (LPVAVIALAPLVVLEMIFLGA), and 426–446 (IHDGGYIPIMIATAFTVVMWT).

This sequence belongs to the HAK/KUP transporter (TC 2.A.72) family.

The protein localises to the cell inner membrane. The enzyme catalyses K(+)(in) + H(+)(in) = K(+)(out) + H(+)(out). Transport of potassium into the cell. Likely operates as a K(+):H(+) symporter. The chain is Probable potassium transport system protein Kup 1 from Rhizobium johnstonii (strain DSM 114642 / LMG 32736 / 3841) (Rhizobium leguminosarum bv. viciae).